The following is a 352-amino-acid chain: Quinolinate synthase (352 aa).

2 residues coordinate iminosuccinate: H48 and S69. C114 serves as a coordination point for [4Fe-4S] cluster. Iminosuccinate contacts are provided by residues 140–142 (YAN) and S157. C201 contributes to the [4Fe-4S] cluster binding site. Iminosuccinate is bound by residues 227-229 (HPE) and T244. C298 is a binding site for [4Fe-4S] cluster.

This sequence belongs to the quinolinate synthase family. Type 1 subfamily. The cofactor is [4Fe-4S] cluster.

It is found in the cytoplasm. The catalysed reaction is iminosuccinate + dihydroxyacetone phosphate = quinolinate + phosphate + 2 H2O + H(+). It functions in the pathway cofactor biosynthesis; NAD(+) biosynthesis; quinolinate from iminoaspartate: step 1/1. Catalyzes the condensation of iminoaspartate with dihydroxyacetone phosphate to form quinolinate. The chain is Quinolinate synthase from Pseudomonas putida (strain ATCC 700007 / DSM 6899 / JCM 31910 / BCRC 17059 / LMG 24140 / F1).